A 526-amino-acid polypeptide reads, in one-letter code: Fatty-acid amide hydrolase 2-B (526 aa).

A helical transmembrane segment spans residues 12-32 (CLLVLVSGLFLALFRLLSPGT). Active-site charge relay system residues include Lys-128 and Ser-203. Ser-227 acts as the Acyl-ester intermediate in catalysis.

This sequence belongs to the amidase family.

It localises to the membrane. It carries out the reaction N-(5Z,8Z,11Z,14Z-eicosatetraenoyl)-ethanolamine + H2O = ethanolamine + (5Z,8Z,11Z,14Z)-eicosatetraenoate. The enzyme catalyses (9Z)-octadecenamide + H2O = (9Z)-octadecenoate + NH4(+). The protein is Fatty-acid amide hydrolase 2-B (faah2b) of Danio rerio (Zebrafish).